The following is an 819-amino-acid chain: Ent-beyerene synthase KSL2, chloroplastic (819 aa).

The N-terminal 58 residues, 1–58 (MLPCLFPAYGSVVACKPSAIDRSPFGLLSQPKQTNRTLIRRPKVTKAFMAIEAMRHCS), are a transit peptide targeting the chloroplast. A compositionally biased stretch (low complexity) spans 58–76 (SSSSSSEEGGAAATTAARS). Residues 58 to 77 (SSSSSSEEGGAAATTAARSA) form a disordered region. Mg(2+)-binding residues include D567, D571, N711, S715, and E719. The DDXXD motif signature appears at 567-571 (DDFFD).

It belongs to the terpene synthase family. Mg(2+) serves as cofactor. As to expression, expressed in roots. Highly expressed in stems, flowers and panicle.

It is found in the plastid. The protein localises to the chloroplast. It catalyses the reaction ent-copalyl diphosphate = ent-beyerene + diphosphate. The catalysed reaction is ent-copalyl diphosphate = ent-kaur-16-ene + diphosphate. It functions in the pathway secondary metabolite biosynthesis; terpenoid biosynthesis. Functionally, diterpene cyclase involved in jasmonic acid-dependent defense mechanisms in roots by mediating the biosynthesis of labdane-related diterpenoids (LRDs) natural products such as ent-beyerene, an antimicrobial compound. Catalyzes the cyclization of ent-CDP into ent-beyerene as a major and ent-kaurene as a minor product. May be involved in the catalysis of an early step of the gibberellin (GA) biosynthesis pathway. This chain is Ent-beyerene synthase KSL2, chloroplastic, found in Oryza sativa subsp. japonica (Rice).